The chain runs to 311 residues: Porphobilinogen deaminase (311 aa).

Cysteine 243 is subject to S-(dipyrrolylmethanemethyl)cysteine.

The protein belongs to the HMBS family. Monomer. Requires dipyrromethane as cofactor.

The enzyme catalyses 4 porphobilinogen + H2O = hydroxymethylbilane + 4 NH4(+). It functions in the pathway porphyrin-containing compound metabolism; protoporphyrin-IX biosynthesis; coproporphyrinogen-III from 5-aminolevulinate: step 2/4. Functionally, tetrapolymerization of the monopyrrole PBG into the hydroxymethylbilane pre-uroporphyrinogen in several discrete steps. The protein is Porphobilinogen deaminase of Aliivibrio salmonicida (strain LFI1238) (Vibrio salmonicida (strain LFI1238)).